The sequence spans 187 residues: Transmembrane protein 11-A, mitochondrial (187 aa).

The next 2 membrane-spanning stretches (helical) occupy residues 79-95 (TAVL…LALP) and 102-119 (VSLP…LYGI).

It belongs to the TMEM11 family.

The protein resides in the mitochondrion inner membrane. In terms of biological role, plays a role in mitochondrial morphogenesis. This is Transmembrane protein 11-A, mitochondrial (tmem11-a) from Xenopus laevis (African clawed frog).